The chain runs to 103 residues: Truncated secreted TNF-receptor-like protein A53R (103 aa).

A TNFR-Cys 1 repeat occupies 36-73 (SCDKGEYLDKRHNQCCNRCPPGEFAKVRCNGNDNTKCE). 3 disulfide bridges follow: Cys-37–Cys-50, Cys-51–Cys-64, and Cys-54–Cys-72. The stretch at 74–103 (RCPPHTYTTIPIILMDVINVENAQPDHLIR) is one TNFR-Cys 2; truncated repeat.

The protein belongs to the poxviridae A53R protein family.

This Vaccinia virus (strain Western Reserve) (VACV) protein is Truncated secreted TNF-receptor-like protein A53R.